A 115-amino-acid polypeptide reads, in one-letter code: Ribonuclease P protein component (115 aa).

Belongs to the RnpA family. Consists of a catalytic RNA component (M1 or rnpB) and a protein subunit.

It catalyses the reaction Endonucleolytic cleavage of RNA, removing 5'-extranucleotides from tRNA precursor.. RNaseP catalyzes the removal of the 5'-leader sequence from pre-tRNA to produce the mature 5'-terminus. It can also cleave other RNA substrates such as 4.5S RNA. The protein component plays an auxiliary but essential role in vivo by binding to the 5'-leader sequence and broadening the substrate specificity of the ribozyme. The chain is Ribonuclease P protein component from Staphylococcus aureus (strain Mu3 / ATCC 700698).